The chain runs to 35 residues: Turgencin-B (35 aa).

Methionine sulfoxide is present on residues methionine 5 and methionine 9. 3 disulfide bridges follow: cysteine 7–cysteine 31, cysteine 11–cysteine 27, and cysteine 16–cysteine 24. A Glycine amide modification is found at glycine 35.

Post-translationally, oxidation likely reduces antimicrobial activity against Gram-positive bacteria and Gram-negative bacteria.

The protein resides in the secreted. Its function is as follows. Has antimicrobial activity against Gram-positive bacteria (C.glutamicum ATCC 13032 (MIC=1.6 uM) and B.subtilis ATCC 23857 (MIC=1.6 uM)) and Gram-negative bacteria (E.coli ATCC 25922 (MIC=12.5 uM) and P.aeruginosa ATCC 27853 (MIC=25.0 uM)). Displays very low activity against the Gram-positive bacteria S.aureus ATCC 9144 (MIC&gt;100 uM). The polypeptide is Turgencin-B (Synoicum turgens (Colonial ascidian)).